The sequence spans 126 residues: Adult-specific rigid cuticular protein 12.4 (126 aa).

In terms of domain architecture, Chitin-binding type R&amp;R spans 9–87 (GGAYNFGFNT…AMAALAPKAP (79 aa)).

Functionally, component of the rigid cuticle of the spider. This chain is Adult-specific rigid cuticular protein 12.4, found in Araneus diadematus (European garden spider).